The chain runs to 165 residues: MVVYVTLIVMLFGSTLVFYSLSPYYSALGLVVFSVPGSFVLSFLGSSFVPIVLFLVYIGGMLVVFPYSSAISPERFPSVNNLGEVVGLVFLFSSWVFMSFDNFQDLKNIFHCFVSGESLVGSNTFYNSGGVLVILGVFVLLVALVGALIISRGIESTIIRAIWLW.

A run of 4 helical transmembrane segments spans residues 1 to 21 (MVVY…FYSL), 47 to 67 (SFVP…VFPY), 83 to 103 (GEVV…FDNF), and 130 to 150 (GVLV…ALII).

The protein belongs to the complex I subunit 6 family.

It is found in the mitochondrion membrane. The catalysed reaction is a ubiquinone + NADH + 5 H(+)(in) = a ubiquinol + NAD(+) + 4 H(+)(out). Functionally, core subunit of the mitochondrial membrane respiratory chain NADH dehydrogenase (Complex I) that is believed to belong to the minimal assembly required for catalysis. Complex I functions in the transfer of electrons from NADH to the respiratory chain. The immediate electron acceptor for the enzyme is believed to be ubiquinone. This Strongylocentrotus purpuratus (Purple sea urchin) protein is NADH-ubiquinone oxidoreductase chain 6 (ND6).